Reading from the N-terminus, the 379-residue chain is Protein RecA (379 aa).

The disordered stretch occupies residues Met1 to Glu24. Positions Ser7 to Leu16 are enriched in polar residues. Position 84-91 (Gly84–Thr91) interacts with ATP.

The protein belongs to the RecA family.

The protein resides in the cytoplasm. Its function is as follows. Can catalyze the hydrolysis of ATP in the presence of single-stranded DNA, the ATP-dependent uptake of single-stranded DNA by duplex DNA, and the ATP-dependent hybridization of homologous single-stranded DNAs. It interacts with LexA causing its activation and leading to its autocatalytic cleavage. In Prochlorococcus marinus (strain MIT 9303), this protein is Protein RecA.